A 937-amino-acid chain; its full sequence is Protocadherin alpha-7 (937 aa).

Residues 1–29 form the signal peptide; the sequence is MVNLRGYNWKSQQLLLFLIIVAAWEAGSG. Residues 30–697 are Extracellular-facing; sequence QLHYSVPEEA…RVDQRLVDVN (668 aa). Cadherin domains follow at residues 34–133, 157–242, 243–350, 351–455, 456–565, and 587–682; these read SVPE…PPMF, ASDA…APVF, DRSL…APQL, TVSS…APLF, AQPE…APTL, and PGQV…SSKV. Cysteine 96 and cysteine 102 are disulfide-bonded. Threonine 223 and threonine 225 each carry an O-linked (Man) threonine glycan. Residues asparagine 257 and asparagine 265 are each glycosylated (N-linked (GlcNAc...) asparagine). Threonine 438 carries an O-linked (Man) threonine glycan. The O-linked (Man) serine glycan is linked to serine 478. Asparagine 548 carries N-linked (GlcNAc...) asparagine glycosylation. The chain crosses the membrane as a helical span at residues 698 to 718; the sequence is VYLIIAICAVSSLLVLTLLLY. The Cytoplasmic segment spans residues 719 to 937; sequence TALRCSATPT…GNSTTDNSDQ (219 aa). 2 disordered regions span residues 755–794 and 816–843; these read RQRVCSGEGPPKTDLMAFSPSLPQGPSSTDNPRQPNPDWR and RAGPGGPDQQWPTVSSATPEPEAGEVSP. 5 PXXP repeats span residues 774–777, 786–789, 819–822, 860–863, and 878–881; these read PSLP, PRQP, PGGP, PGNP, and PGSP. The tract at residues 774–881 is 5 X 4 AA repeats of P-X-X-P; it reads PSLPQGPSST…PDKFIIPGSP (108 aa). A compositionally biased stretch (polar residues) spans 775 to 787; the sequence is SLPQGPSSTDNPR. The disordered stretch occupies residues 887-937; it reads RQEPANNQIDKSDFITFGKKEETKKKKKKKKGNKTQEKKEKGNSTTDNSDQ. Positions 896-910 are enriched in basic and acidic residues; sequence DKSDFITFGKKEETK.

Forms homodimers in trans (molecules expressed by two different cells). Forms promiscuous heterodimers in cis (at the plasma membrane of the same cell) with other protocadherins.

The protein localises to the cell membrane. In terms of biological role, calcium-dependent cell-adhesion protein involved in cells self-recognition and non-self discrimination. Thereby, it is involved in the establishment and maintenance of specific neuronal connections in the brain. The chain is Protocadherin alpha-7 from Mus musculus (Mouse).